We begin with the raw amino-acid sequence, 124 residues long: uncharacterized protein (124 aa).

The protein localises to the cytoplasm. It is found in the nucleus. This is an uncharacterized protein from Schizosaccharomyces pombe (strain 972 / ATCC 24843) (Fission yeast).